Here is a 219-residue protein sequence, read N- to C-terminus: MASAGDTQAGPRDAADQNFDYMFKLLLIGNSSVGKTSFLFRYADDSFTPAFVSTVGIDFKVKTVYRHDKRIKLQIWDTAGQERYRTITTAYYRGAMGFLLMYDIANQESFAAVQDWATQIKTYSWDNAQVILVGNKCDLEDERVVPAEDGRRLADDLGFEFFEASAKENINVKQVFERLVDVICEKMNESLEPSSSSGSNGKGPAVGDAPAPQPSSCSC.

Position 2 is an N-acetylalanine (Ala2). Gly29–Ser37 contributes to the GDP binding site. GTP contacts are provided by Ser31, Ser32, Val33, Gly34, Lys35, Thr36, Ser37, Pro49, and Ser53. Residue Thr36 participates in Mg(2+) binding. The Switch 1 motif lies at Pro49–Asp58. Mg(2+) contacts are provided by Thr54 and Asp77. Gly80 lines the GTP pocket. The Switch 2 signature appears at Gly80 to Met96. Residue Thr86 is modified to Phosphothreonine; by LRRK2. Residues Asn135, Lys136, Asp138, Ala166, and Lys167 each coordinate GTP. GDP contacts are provided by residues Asn135 to Asp138 and Ser165 to Lys167. Phosphoserine is present on Ser190. Residues Ser190–Ser199 are compositionally biased toward low complexity. The disordered stretch occupies residues Ser190–Cys219. S-geranylgeranyl cysteine attachment occurs at residues Cys217 and Cys219. Cys219 is subject to Cysteine methyl ester.

It belongs to the small GTPase superfamily. Rab family. In terms of assembly, interacts with RIMS1, RIMS2, RPH3A, RPH3AL and RAB3IP. The GTP-bound form interacts with REP15. Interacts with CHM and CHML; phosphorylation at Thr-86 disrupts these interactions. Interacts with MADD (via uDENN domain); the GTP-bound form is preferred for interaction. Requires Mg(2+) as cofactor. Phosphorylation of Thr-86 in the switch II region by LRRK2 prevents the association of RAB regulatory proteins, including CHM and CHML. In terms of tissue distribution, highly expressed in granulocytes of peripheral blood. Constitutively expressed at low levels in all hematopoietic cell lines investigated.

Its subcellular location is the cell membrane. The catalysed reaction is GTP + H2O = GDP + phosphate + H(+). Its activity is regulated as follows. Regulated by guanine nucleotide exchange factors (GEFs) which promote the exchange of bound GDP for free GTP. Regulated by GTPase activating proteins (GAPs) which increase the GTP hydrolysis activity. Inhibited by GDP dissociation inhibitors (GDIs) which prevent Rab-GDP dissociation. The small GTPases Rab are key regulators of intracellular membrane trafficking, from the formation of transport vesicles to their fusion with membranes. Rabs cycle between an inactive GDP-bound form and an active GTP-bound form that is able to recruit to membranes different sets of downstream effectors directly responsible for vesicle formation, movement, tethering and fusion. RAB3D may be involved in the insulin-induced exocytosis of GLUT4-containing vesicles in adipocytes. The chain is Ras-related protein Rab-3D from Homo sapiens (Human).